Reading from the N-terminus, the 327-residue chain is Protein EMSY-LIKE 1 (327 aa).

The region spanning 1-88 (METQIHQLEQ…HATIQPFDVL (88 aa)) is the ENT domain. Residues 32–58 (ESLITELRKELRVSDDEHRELLSRVNK) are a coiled coil. Disordered stretches follow at residues 206–257 (GHGS…SDDI) and 305–327 (ADTS…MPQG). Over residues 214–232 (GNRRGQIHGGRGRGPRIHQ) the composition is skewed to basic residues. Residues 281 to 306 (LELDKAKKMLKEHEQALIAAIARLAD) adopt a coiled-coil conformation. S308 carries the phosphoserine modification. Residues 318–327 (YSHDHPMPQG) are compositionally biased toward basic and acidic residues.

In terms of assembly, isoform 1 interacts with EDM2 in nucleus.

The protein resides in the nucleus. In terms of biological role, probably involved in the regulation of chromatin states. Contributes to RPP7-mediated and basal immunity, especially against Hyaloperonospora arabidopsidis isolate Hiks1. Regulates negatively EDM2-dependent floral transition. The polypeptide is Protein EMSY-LIKE 1 (Arabidopsis thaliana (Mouse-ear cress)).